The primary structure comprises 298 residues: MLSDDELTGLDEFALLAENAEQAGVNGPLPEVERVQAGAISALRWGGSAPRVIFLHGGGQNAHTWDTVIVGLGEPALAVDLPGHGHSAWREDGNYSPQLNSETLAPVLRELAPGAEFVVGMSLGGLTAIRLAAMAPDLVGELVLVDVTPSALQRHAELTAEQRGTVALMHGEREFPSFQAMLDLTIAAAPHRDVKSLRRGVFHNSRRLDNGNWVWRYDAIRTFGDFAGLWDDVDALSAPITLVRGGSSGFVTDQDTAELHRRATHFRGVHIVEKSGHSVQSDQPRALIEIVRGVLDTR.

Serine 122 serves as the catalytic Nucleophile. Residues aspartate 146 and histidine 277 contribute to the active site.

Belongs to the AB hydrolase superfamily. As to quaternary structure, monomer.

The catalysed reaction is a carboxylic ester + H2O = an alcohol + a carboxylate + H(+). It catalyses the reaction a butanoate ester + H2O = an aliphatic alcohol + butanoate + H(+). It carries out the reaction an acetyl ester + H2O = an aliphatic alcohol + acetate + H(+). The enzyme catalyses a hexanoate ester + H2O = an aliphatic alcohol + hexanoate + H(+). The catalysed reaction is a tetradecanoate ester + H2O = an aliphatic alcohol + tetradecanoate + H(+). Its activity is regulated as follows. Hydrolysis of a fluorogenic ester substrate (MOAME) is allosterically inhibited by divalent transition metal cations (Cu(2+), Zn(2+), Ni(2+) and Co(2+)). Inhibition is largely due to a two order of magnitude drop in kcat, with relatively little change in KM. The thermal stability decreases with increasing concentrations of Ni(2+). Its function is as follows. Esterase likely involved in ester/lipid metabolism. Shows strong substrate selectivity toward short, straight chain alkyl esters with the highest activity toward four atom chains. The physiological substrate is unknown. Is able to hydrolyze ester bonds within a wide range of p-nitrophenyl derivatives (C2-C14) in vitro. The polypeptide is Esterase Rv0045c (Mycobacterium tuberculosis (strain ATCC 25618 / H37Rv)).